Consider the following 274-residue polypeptide: WIMGHMVNAIEQVDEFLNLGANAIEFDIDFDKDGIAQITHHGIPCDCGRKCTKKAIFTEYLDNIRQVTTPDDPKFREQLVLLALDLKLQRISSAKAYRAGEDVAKKLLDHYWQRGNSRARAYILLNIPLVEDYEFIRAFKDTLKNEGYESYNDRVGINFTGNEDLDKIRDVLEILGIHKQVWQADGITSCFARGTERLKEALEKRDTPGYNYINKVYAWTLVRKSIMRRSLRLGVDGVMSNNPDRVIKVLKEKEFADKFRLATYNDNPWEKFRG.

Residue H5 is part of the active site. Mg(2+)-binding residues include E25 and D27. Residue H41 is the Nucleophile of the active site. 2 disulfide bridges follow: C45/C51 and C47/C190. D85 lines the Mg(2+) pocket.

This sequence belongs to the arthropod phospholipase D family. Class II subfamily. Requires Mg(2+) as cofactor. Expressed by the venom gland.

Its subcellular location is the secreted. The catalysed reaction is an N-(acyl)-sphingosylphosphocholine = an N-(acyl)-sphingosyl-1,3-cyclic phosphate + choline. It catalyses the reaction an N-(acyl)-sphingosylphosphoethanolamine = an N-(acyl)-sphingosyl-1,3-cyclic phosphate + ethanolamine. It carries out the reaction a 1-acyl-sn-glycero-3-phosphocholine = a 1-acyl-sn-glycero-2,3-cyclic phosphate + choline. The enzyme catalyses a 1-acyl-sn-glycero-3-phosphoethanolamine = a 1-acyl-sn-glycero-2,3-cyclic phosphate + ethanolamine. Its function is as follows. Dermonecrotic toxins cleave the phosphodiester linkage between the phosphate and headgroup of certain phospholipids (sphingolipid and lysolipid substrates), forming an alcohol (often choline) and a cyclic phosphate. This toxin acts on sphingomyelin (SM). It may also act on ceramide phosphoethanolamine (CPE), lysophosphatidylcholine (LPC) and lysophosphatidylethanolamine (LPE), but not on lysophosphatidylserine (LPS), and lysophosphatidylglycerol (LPG). It acts by transphosphatidylation, releasing exclusively cyclic phosphate products as second products. Induces dermonecrosis, hemolysis, increased vascular permeability, edema, inflammatory response, and platelet aggregation. This is Dermonecrotic toxin SdSicTox-betaIIB1bviii from Sicarius cf. damarensis (strain GJB-2008) (Six-eyed sand spider).